We begin with the raw amino-acid sequence, 278 residues long: Probable ribosomal RNA small subunit methyltransferase A (278 aa).

6 residues coordinate S-adenosyl-L-methionine: N23, L25, G50, E71, D95, and N110.

It belongs to the class I-like SAM-binding methyltransferase superfamily. rRNA adenine N(6)-methyltransferase family. RsmA subfamily.

Its subcellular location is the cytoplasm. In terms of biological role, specifically dimethylates two adjacent adenosines in the loop of a conserved hairpin near the 3'-end of 16S rRNA in the 30S particle. May play a critical role in biogenesis of 30S subunits. The chain is Probable ribosomal RNA small subunit methyltransferase A from Thermococcus gammatolerans (strain DSM 15229 / JCM 11827 / EJ3).